We begin with the raw amino-acid sequence, 299 residues long: CRISPR system Cms protein Csm4 (299 aa).

This sequence belongs to the CRISPR-associated Csm4 family. In terms of assembly, part of the Csm effector complex that includes at least Cas10(1), Csm2(3), Csm3(5), Csm4(1), Csm5(1) and mature crRNA. The Csm complex is elongated and slightly twisted with a maximal length of 215 Angstroms and a diameter of 75-80 Angstroms. It has been modeled to have a central protein filamant of Csm3 subunits along which the dsRNA helix of paired crRNA and target RNA binds. The filament is capped at one end by Cas10 and Csm4 and at the other end by Csm5; ssDNA is thought to bind to the N-terminal HD domain of Cas10. Csm with a precursor crRNA does not include Csm5, while Cas6, the enzyme probably involved in pre-crRNA processing, is found associated with a subset of the Csm complex.

In terms of biological role, CRISPR (clustered regularly interspaced short palindromic repeat) is an adaptive immune system that provides protection against mobile genetic elements (viruses, transposable elements and conjugative plasmids). CRISPR clusters contain spacers, sequences complementary to antecedent mobile elements, and target invading nucleic acids. CRISPR clusters are transcribed and processed into CRISPR RNA (crRNA). The type III-A Csm effector complex binds crRNA and acts as a crRNA-guided RNase, DNase and cyclic oligoadenylate synthase; binding of target RNA cognate to the crRNA is required for all activities. In a heterologous host this Csm effector complex restricts ssRNA phage MS2, suggesting it may target RNA viruses in vivo. Its function is as follows. Csm functions as a non-specific ssDNase. Base-pairing between crRNA and target RNA to form a ternary Csm complex activates a ssDNase activity; target RNA cleavage suppresses the ssDNase, a temporal control that prevents uncontrolled DNA degradation. Viral RNA transcripts probably tether the Csm complex to the viral genome, recruiting Cas10 ssDNA activity which is able to degrade DNA in the transcription bubble, spatially controlling the DNase activity. Functionally, the subunit probably binds to the 5' handle of the crRNA, helping in discrimination between self- and non-self. In Streptococcus thermophilus, this protein is CRISPR system Cms protein Csm4.